We begin with the raw amino-acid sequence, 557 residues long: Probable transcription factor sol4 (557 aa).

The fungal transcription factor domain stretch occupies residues 26 to 186; sequence IQYFFEDINW…EREMRRRMFC (161 aa). The tract at residues 463–490 is disordered; sequence SGTQTRSMPSTETLTYNSSSSTSYGDGH. Residues 472-485 show a composition bias toward low complexity; that stretch reads STETLTYNSSSSTS.

It localises to the nucleus. Functionally, probable transcription factor that regulates the expression of the gene cluster that mediates the biosynthesis of the phytotoxin solanapyrone, a causal agent of early blight disease of potato and tomato. The polypeptide is Probable transcription factor sol4 (sol4) (Alternaria solani).